A 348-amino-acid chain; its full sequence is Anthranilate phosphoribosyltransferase (348 aa).

5-phospho-alpha-D-ribose 1-diphosphate contacts are provided by residues Gly-89, 92–93 (GD), Thr-97, 99–102 (NIST), 117–125 (KHGNRSVSS), and Ser-129. Gly-89 is an anthranilate binding site. Ser-101 contacts Mg(2+). Asn-120 serves as a coordination point for anthranilate. Arg-175 contributes to the anthranilate binding site. Mg(2+)-binding residues include Asp-233 and Glu-234.

This sequence belongs to the anthranilate phosphoribosyltransferase family. Homodimer. Mg(2+) serves as cofactor.

It carries out the reaction N-(5-phospho-beta-D-ribosyl)anthranilate + diphosphate = 5-phospho-alpha-D-ribose 1-diphosphate + anthranilate. It participates in amino-acid biosynthesis; L-tryptophan biosynthesis; L-tryptophan from chorismate: step 2/5. Catalyzes the transfer of the phosphoribosyl group of 5-phosphorylribose-1-pyrophosphate (PRPP) to anthranilate to yield N-(5'-phosphoribosyl)-anthranilate (PRA). This Shewanella putrefaciens (strain CN-32 / ATCC BAA-453) protein is Anthranilate phosphoribosyltransferase.